The sequence spans 294 residues: Ribosomal RNA small subunit methyltransferase I (294 aa).

It belongs to the methyltransferase superfamily. RsmI family.

Its subcellular location is the cytoplasm. It catalyses the reaction cytidine(1402) in 16S rRNA + S-adenosyl-L-methionine = 2'-O-methylcytidine(1402) in 16S rRNA + S-adenosyl-L-homocysteine + H(+). Functionally, catalyzes the 2'-O-methylation of the ribose of cytidine 1402 (C1402) in 16S rRNA. The sequence is that of Ribosomal RNA small subunit methyltransferase I from Mesorhizobium japonicum (strain LMG 29417 / CECT 9101 / MAFF 303099) (Mesorhizobium loti (strain MAFF 303099)).